The sequence spans 336 residues: Dihydroorotate dehydrogenase (quinone) (336 aa).

Residues 62-66 and threonine 86 each bind FMN; that span reads AGLDK. Residue lysine 66 coordinates substrate. 111–115 provides a ligand contact to substrate; the sequence is NRMGF. Asparagine 139 and asparagine 172 together coordinate FMN. Substrate is bound at residue asparagine 172. Catalysis depends on serine 175, which acts as the Nucleophile. Position 177 (asparagine 177) interacts with substrate. 2 residues coordinate FMN: lysine 217 and threonine 245. 246 to 247 serves as a coordination point for substrate; the sequence is NT. FMN-binding positions include glycine 268, glycine 297, and 318-319; that span reads YS.

The protein belongs to the dihydroorotate dehydrogenase family. Type 2 subfamily. Monomer. Requires FMN as cofactor.

The protein resides in the cell membrane. It carries out the reaction (S)-dihydroorotate + a quinone = orotate + a quinol. Its pathway is pyrimidine metabolism; UMP biosynthesis via de novo pathway; orotate from (S)-dihydroorotate (quinone route): step 1/1. Its function is as follows. Catalyzes the conversion of dihydroorotate to orotate with quinone as electron acceptor. This Proteus mirabilis (strain HI4320) protein is Dihydroorotate dehydrogenase (quinone).